A 353-amino-acid polypeptide reads, in one-letter code: Photosystem II D2 protein (353 aa).

Threonine 2 carries the post-translational modification N-acetylthreonine. The residue at position 2 (threonine 2) is a Phosphothreonine. A helical transmembrane segment spans residues 41–61 (CAYFSLGGWFTGTTFVTSWYT). Histidine 118 is a binding site for chlorophyll a. The chain crosses the membrane as a helical span at residues 125–141 (GFMLRQFELARSVQLRP). Pheophytin a-binding residues include glutamine 130 and asparagine 143. A helical transmembrane segment spans residues 153-166 (VFVSVFLIYPLGQS). A chlorophyll a-binding site is contributed by histidine 198. The helical transmembrane segment at 208-228 (AALLCAIHGATVENTLFEDGD) threads the bilayer. A plastoquinone is bound by residues histidine 215 and phenylalanine 262. Residue histidine 215 participates in Fe cation binding. Residue histidine 269 coordinates Fe cation. Residues 279-295 (GLWMSAIGVVGLALNLR) form a helical membrane-spanning segment.

The protein belongs to the reaction center PufL/M/PsbA/D family. PSII is composed of 1 copy each of membrane proteins PsbA, PsbB, PsbC, PsbD, PsbE, PsbF, PsbH, PsbI, PsbJ, PsbK, PsbL, PsbM, PsbT, PsbX, PsbY, PsbZ, Psb30/Ycf12, at least 3 peripheral proteins of the oxygen-evolving complex and a large number of cofactors. It forms dimeric complexes. The cofactor is The D1/D2 heterodimer binds P680, chlorophylls that are the primary electron donor of PSII, and subsequent electron acceptors. It shares a non-heme iron and each subunit binds pheophytin, quinone, additional chlorophylls, carotenoids and lipids. There is also a Cl(-1) ion associated with D1 and D2, which is required for oxygen evolution. The PSII complex binds additional chlorophylls, carotenoids and specific lipids..

The protein resides in the plastid. Its subcellular location is the chloroplast thylakoid membrane. The catalysed reaction is 2 a plastoquinone + 4 hnu + 2 H2O = 2 a plastoquinol + O2. Photosystem II (PSII) is a light-driven water:plastoquinone oxidoreductase that uses light energy to abstract electrons from H(2)O, generating O(2) and a proton gradient subsequently used for ATP formation. It consists of a core antenna complex that captures photons, and an electron transfer chain that converts photonic excitation into a charge separation. The D1/D2 (PsbA/PsbD) reaction center heterodimer binds P680, the primary electron donor of PSII as well as several subsequent electron acceptors. D2 is needed for assembly of a stable PSII complex. This chain is Photosystem II D2 protein, found in Physcomitrium patens (Spreading-leaved earth moss).